Here is a 181-residue protein sequence, read N- to C-terminus: SecB-like chaperone MT2006 (181 aa).

Belongs to the SecB-like family. As to quaternary structure, homotetramer, interacts with antitoxin HigA1.

In terms of biological role, chaperone component of an atypical, type II toxin-antitoxin chaperone (TAC) module, probably required for antitoxin HigA1 to neutralize its cognate toxin HigB1. This chain is SecB-like chaperone MT2006 (secBL), found in Mycobacterium tuberculosis (strain CDC 1551 / Oshkosh).